The sequence spans 305 residues: ATP synthase F(0) complex subunit B2, mitochondrial (305 aa).

Residues 1–22 (MSLSRCLPLGQNARVIIIPARL) constitute a mitochondrion transit peptide.

It belongs to the eukaryotic ATPase B chain family. As to quaternary structure, subunit of the F-type ATPase which has 2 components, CF(1) - the catalytic core - and CF(0) - the membrane proton channel.

The protein resides in the mitochondrion. It localises to the mitochondrion inner membrane. In terms of biological role, mitochondrial membrane ATP synthase (F(1)F(0) ATP synthase or Complex V) produces ATP from ADP in the presence of a proton gradient across the membrane which is generated by electron transport complexes of the respiratory chain. F-type ATPases consist of two structural domains, F(1) - containing the extramembraneous catalytic core, and F(0) - containing the membrane proton channel, linked together by a central stalk and a peripheral stalk. During catalysis, ATP synthesis in the catalytic domain of F(1) is coupled via a rotary mechanism of the central stalk subunits to proton translocation. Part of the complex F(0) domain and the peripheric stalk, which acts as a stator to hold the subunits of the catalytic subcomplexes relative to the rotary elements. Plays a role in somatic development. Does not play a role in germline development. This Caenorhabditis elegans protein is ATP synthase F(0) complex subunit B2, mitochondrial.